The following is a 111-amino-acid chain: Somatostatin-1B (111 aa).

A signal peptide spans 1-19 (MQLLSSLVSLLLVLYSVRA). Positions 20-87 (AAVLPVEERN…RLEERAVYNR (68 aa)) are excised as a propeptide. C100 and C111 form a disulfide bridge.

Belongs to the somatostatin family.

Its subcellular location is the secreted. Its function is as follows. Somatostatin inhibits the release of somatotropin. In Carassius auratus (Goldfish), this protein is Somatostatin-1B (sst1b).